A 394-amino-acid chain; its full sequence is Venom metalloproteinase antarease-like TtrivMP_A (394 aa).

Positions 1 to 16 (MISYLASIFLLATVSA) are cleaved as a signal peptide. A propeptide spanning residues 17-158 (VPSGRVEVVF…AENVSRMAEE (142 aa)) is cleaved from the precursor. An N-linked (GlcNAc...) asparagine glycan is attached at asparagine 151. One can recognise a Peptidase M12B domain in the interval 162–390 (IVVEYYIVTD…KPTAFCIFEQ (229 aa)). Cysteine 295 and cysteine 386 are oxidised to a cystine. Position 319 (histidine 319) interacts with Zn(2+). Glutamate 320 is a catalytic residue. Residues histidine 323 and histidine 329 each coordinate Zn(2+).

It belongs to the venom metalloproteinase (M12B) family. Zn(2+) serves as cofactor. In terms of tissue distribution, expressed by the venom gland.

It is found in the secreted. With respect to regulation, inhibited by EDTA. Functionally, acts as a metalloprotease. Penetrates intact tissue and specifically cleaves the vesicle-associated membrane protein 2 (VAMP2) (part of the SNARE complex) involved in pancreatic secretion, thus disrupting the normal vesicular traffic. This chain is Venom metalloproteinase antarease-like TtrivMP_A, found in Tityus trivittatus (Argentinean scorpion).